A 173-amino-acid polypeptide reads, in one-letter code: 16S rRNA aminocarboxypropyltransferase (173 aa).

The S-adenosyl-L-methionine site is built by Thr25, Leu72, Leu96, and Ser115.

This sequence belongs to the TDD superfamily. TSR3 family.

It localises to the cytoplasm. The enzyme catalyses an N(1)-methylpseudouridine in rRNA + S-adenosyl-L-methionine = N(1)-methyl-N(3)-[(3S)-3-amino-3-carboxypropyl]pseudouridine in rRNA + S-methyl-5'-thioadenosine + H(+). Aminocarboxypropyltransferase that catalyzes the aminocarboxypropyl transfer on pseudouridine corresponding to position 914 in M.jannaschii 16S rRNA. It constitutes the last step in biosynthesis of the hypermodified N1-methyl-N3-(3-amino-3-carboxypropyl) pseudouridine (m1acp3-Psi). The chain is 16S rRNA aminocarboxypropyltransferase from Methanosarcina mazei (strain ATCC BAA-159 / DSM 3647 / Goe1 / Go1 / JCM 11833 / OCM 88) (Methanosarcina frisia).